We begin with the raw amino-acid sequence, 274 residues long: 2,3,4,5-tetrahydropyridine-2,6-dicarboxylate N-succinyltransferase (274 aa).

This sequence belongs to the transferase hexapeptide repeat family.

It is found in the cytoplasm. The enzyme catalyses (S)-2,3,4,5-tetrahydrodipicolinate + succinyl-CoA + H2O = (S)-2-succinylamino-6-oxoheptanedioate + CoA. It functions in the pathway amino-acid biosynthesis; L-lysine biosynthesis via DAP pathway; LL-2,6-diaminopimelate from (S)-tetrahydrodipicolinate (succinylase route): step 1/3. The chain is 2,3,4,5-tetrahydropyridine-2,6-dicarboxylate N-succinyltransferase from Escherichia coli (strain SMS-3-5 / SECEC).